The following is a 542-amino-acid chain: Chaperonin GroEL 2 (542 aa).

ATP contacts are provided by residues 30–33 (TLGP), Lys51, 87–91 (DGTTT), Gly415, and Asp496.

It belongs to the chaperonin (HSP60) family. As to quaternary structure, forms a cylinder of 14 subunits composed of two heptameric rings stacked back-to-back. Interacts with the co-chaperonin GroES.

It localises to the cytoplasm. It carries out the reaction ATP + H2O + a folded polypeptide = ADP + phosphate + an unfolded polypeptide.. Its function is as follows. Together with its co-chaperonin GroES, plays an essential role in assisting protein folding. The GroEL-GroES system forms a nano-cage that allows encapsulation of the non-native substrate proteins and provides a physical environment optimized to promote and accelerate protein folding. The chain is Chaperonin GroEL 2 from Cereibacter sphaeroides (strain ATCC 17023 / DSM 158 / JCM 6121 / CCUG 31486 / LMG 2827 / NBRC 12203 / NCIMB 8253 / ATH 2.4.1.) (Rhodobacter sphaeroides).